Here is a 403-residue protein sequence, read N- to C-terminus: Phosphoglycerate kinase (403 aa).

Substrate contacts are provided by residues D21 to N23, R36, H59 to R62, R119, and R154. ATP-binding positions include K207, G299, E330, and G357–A360.

It belongs to the phosphoglycerate kinase family. Monomer.

It localises to the cytoplasm. It catalyses the reaction (2R)-3-phosphoglycerate + ATP = (2R)-3-phospho-glyceroyl phosphate + ADP. Its pathway is carbohydrate degradation; glycolysis; pyruvate from D-glyceraldehyde 3-phosphate: step 2/5. The polypeptide is Phosphoglycerate kinase (pgk) (Chlamydia trachomatis serovar D (strain ATCC VR-885 / DSM 19411 / UW-3/Cx)).